Reading from the N-terminus, the 596-residue chain is Beta-fructofuranosidase, insoluble isoenzyme 7 (596 aa).

A signal peptide spans 1–24 (MARLGLAVCAASFHLFLLLASTSS). Substrate-binding positions include 51-54 (WQND), glutamine 70, and tryptophan 78. The active site involves aspartate 54. Residue asparagine 82 is glycosylated (N-linked (GlcNAc...) asparagine). Substrate-binding positions include 115–116 (WS), 179–180 (RD), and glutamate 234. Residue asparagine 330 is glycosylated (N-linked (GlcNAc...) asparagine). Cysteine 432 and cysteine 478 are disulfide-bonded. N-linked (GlcNAc...) asparagine glycosylation is present at asparagine 552.

This sequence belongs to the glycosyl hydrolase 32 family. Expressed in roots, leaves and flowers. Weakly expressed in seeds.

The protein localises to the secreted. It localises to the extracellular space. Its subcellular location is the apoplast. It is found in the cell wall. The enzyme catalyses Hydrolysis of terminal non-reducing beta-D-fructofuranoside residues in beta-D-fructofuranosides.. Its function is as follows. May play a role in sucrose partitioning during seed development. The polypeptide is Beta-fructofuranosidase, insoluble isoenzyme 7 (CIN7) (Oryza sativa subsp. japonica (Rice)).